The following is a 69-amino-acid chain: Conotoxin Lt5.7 (69 aa).

Positions 1–19 are cleaved as a signal peptide; it reads MLCLPVFIILLLLASPAAP. A propeptide spanning residues 20–54 is cleaved from the precursor; the sequence is KSLETRIQNDLIRAGLTDADLKTEKGFLSGLLNVA.

Belongs to the conotoxin T superfamily. Post-translationally, contains 2 disulfide bonds that can be either 'C1-C3, C2-C4' or 'C1-C4, C2-C3', since these disulfide connectivities have been observed for conotoxins with cysteine framework V (for examples, see AC P0DQQ7 and AC P81755). As to expression, expressed by the venom duct.

It localises to the secreted. The polypeptide is Conotoxin Lt5.7 (Conus litteratus (Lettered cone)).